We begin with the raw amino-acid sequence, 161 residues long: Ribosome maturation factor RimP (161 aa).

The protein belongs to the RimP family.

It localises to the cytoplasm. Required for maturation of 30S ribosomal subunits. The chain is Ribosome maturation factor RimP from Desulfosudis oleivorans (strain DSM 6200 / JCM 39069 / Hxd3) (Desulfococcus oleovorans).